A 174-amino-acid chain; its full sequence is Ribulose bisphosphate carboxylase small subunit, chloroplastic 1 (174 aa).

A chloroplast-targeting transit peptide spans 1–45 (MAPAVMASSATTVAPFQGLKSTAGLPVSRRSRGSLGSVSNGGRIR).

It belongs to the RuBisCO small chain family. As to quaternary structure, heterohexadecamer of 8 large and 8 small subunits.

It is found in the plastid. The protein localises to the chloroplast. Its function is as follows. RuBisCO catalyzes two reactions: the carboxylation of D-ribulose 1,5-bisphosphate, the primary event in carbon dioxide fixation, as well as the oxidative fragmentation of the pentose substrate. Both reactions occur simultaneously and in competition at the same active site. Although the small subunit is not catalytic it is essential for maximal activity. The sequence is that of Ribulose bisphosphate carboxylase small subunit, chloroplastic 1 from Triticum aestivum (Wheat).